The chain runs to 124 residues: Small ribosomal subunit protein bS6 (124 aa).

The interval 96–124 (ETGPSPMMKEVQREEAKKAAAAQPAEAQA) is disordered. Residues 114 to 124 (AAAAQPAEAQA) are compositionally biased toward low complexity.

This sequence belongs to the bacterial ribosomal protein bS6 family.

Its function is as follows. Binds together with bS18 to 16S ribosomal RNA. In Burkholderia orbicola (strain MC0-3), this protein is Small ribosomal subunit protein bS6.